Here is a 391-residue protein sequence, read N- to C-terminus: Homocysteine-responsive endoplasmic reticulum-resident ubiquitin-like domain member 1 protein (391 aa).

At methionine 1 the chain carries N-acetylmethionine. Topologically, residues 1-263 (MESETEPEPV…VEEDDEINRD (263 aa)) are cytoplasmic. The Ubiquitin-like domain occupies 10-72 (VTLLVKSPNQ…LLDHQCLRDL (63 aa)). A disordered region spans residues 100-126 (KVAESTEEPAGSNRGQYPEDSSSDGLR). Residues 112–124 (NRGQYPEDSSSDG) show a composition bias toward polar residues. An interaction with UBQLN1 region spans residues 115–200 (QYPEDSSSDG…ASGAFVPPPS (86 aa)). Serine 135 is modified (phosphoserine). An interaction with SYVN1 region spans residues 170 to 190 (LSWFQQIYARQYYMQYLAATA). Residues 264–284 (WLDWTYSAATFSVFLSILYFY) traverse the membrane as a helical segment. Topologically, residues 285-289 (SSLSR) are lumenal. Residues 290–310 (FLMVMGATVVMYLHHVGWFPF) form a helical membrane-spanning segment. At 311–391 (RPRPVQNFPN…LPEGPPAIAN (81 aa)) the chain is on the cytoplasmic side. Residues 318–359 (FPNDGPPPDVVNQDPNNNLQEGTDPETEDPNHLPPDRDVLDG) form a disordered region. A compositionally biased stretch (basic and acidic residues) spans 346–357 (DPNHLPPDRDVL).

As to quaternary structure, interacts with PSEN1 and PSEN2. Interacts with UBXN6. Interacts with UBQLN1, UBQLN2 and UBQLN4. Component of the HRD1 complex, which comprises at least SYNV1/HRD1, FAM8A1, HERPUD1/HERP, OS9, SEL1L and UBE2J1. FAM8A1 binding to SYNV1 may promote recruitment of HERPUD1 to the HRD1 complex. As to expression, widely expressed; in the brain, expression seems to be restricted to neurons and vascular smooth muscle cells. Present in activated microglia in senile plaques in the brain of patients with Alzheimer disease.

It localises to the endoplasmic reticulum membrane. Its function is as follows. Component of the endoplasmic reticulum quality control (ERQC) system also called ER-associated degradation (ERAD) involved in ubiquitin-dependent degradation of misfolded endoplasmic reticulum proteins. Could enhance presenilin-mediated amyloid-beta protein 40 generation. Binds to ubiquilins and this interaction is required for efficient degradation of CD3D via the ERAD pathway. The polypeptide is Homocysteine-responsive endoplasmic reticulum-resident ubiquitin-like domain member 1 protein (HERPUD1) (Homo sapiens (Human)).